Consider the following 118-residue polypeptide: Holo-[acyl-carrier-protein] synthase (118 aa).

Positions 8 and 58 each coordinate Mg(2+).

The protein belongs to the P-Pant transferase superfamily. AcpS family. Mg(2+) serves as cofactor.

Its subcellular location is the cytoplasm. It carries out the reaction apo-[ACP] + CoA = holo-[ACP] + adenosine 3',5'-bisphosphate + H(+). Its function is as follows. Transfers the 4'-phosphopantetheine moiety from coenzyme A to a Ser of acyl-carrier-protein. This chain is Holo-[acyl-carrier-protein] synthase, found in Listeria welshimeri serovar 6b (strain ATCC 35897 / DSM 20650 / CCUG 15529 / CIP 8149 / NCTC 11857 / SLCC 5334 / V8).